We begin with the raw amino-acid sequence, 205 residues long: Metal-independent carbonic anhydrase (205 aa).

The N-terminal stretch at 1-24 (MNLFKPRILVLFAATALISGIAIV) is a signal peptide. 2 residues coordinate hydrogencarbonate: T106 and Y124.

The protein belongs to the iota-class carbonic anhydrase family. As to quaternary structure, homotetramer; dimer of dimers. The cofactor is Does not require a metal cofactor..

It carries out the reaction hydrogencarbonate + H(+) = CO2 + H2O. With respect to regulation, activity is not affected by EDTA or 2,6-pyridinedicarboxylic acid (PDA). Activity is not affected by addition of most divalent metal ions, except zinc ions which decrease the activity. Inhibited by the iodide ion. In terms of biological role, catalyzes the hydration of carbon dioxide (CO2) to bicarbonate (HCO3(-)). Has only very low bicarbonate dehydration activity. May function even in metal-poor environments. The polypeptide is Metal-independent carbonic anhydrase (Nostoc sp. (strain PCC 7120 / SAG 25.82 / UTEX 2576)).